We begin with the raw amino-acid sequence, 367 residues long: 3-dehydroquinate synthase (367 aa).

NAD(+) is bound by residues 72–77 (DGENYK), 106–110 (GVIGD), 130–131 (TT), K143, K152, and 170–173 (FLST). 3 residues coordinate Zn(2+): E185, H248, and H265.

It belongs to the sugar phosphate cyclases superfamily. Dehydroquinate synthase family. The cofactor is Co(2+). It depends on Zn(2+) as a cofactor. Requires NAD(+) as cofactor.

Its subcellular location is the cytoplasm. It carries out the reaction 7-phospho-2-dehydro-3-deoxy-D-arabino-heptonate = 3-dehydroquinate + phosphate. The protein operates within metabolic intermediate biosynthesis; chorismate biosynthesis; chorismate from D-erythrose 4-phosphate and phosphoenolpyruvate: step 2/7. Functionally, catalyzes the conversion of 3-deoxy-D-arabino-heptulosonate 7-phosphate (DAHP) to dehydroquinate (DHQ). This chain is 3-dehydroquinate synthase, found in Buchnera aphidicola subsp. Cinara cedri (strain Cc).